Here is a 347-residue protein sequence, read N- to C-terminus: Phospho-N-acetylmuramoyl-pentapeptide-transferase (347 aa).

The next 10 membrane-spanning stretches (helical) occupy residues 10–30, 67–87, 91–111, 127–147, 164–184, 195–215, 220–240, 250–270, 275–295, and 325–345; these read SLVF…IFLG, AGGI…LPLG, TWLF…DDIV, FVLQ…IYKG, LGHS…AIVG, LDGL…VVAV, IPLA…SLAF, VFMG…CAVM, LLLI…ILQI, and VVKR…IAAL.

The protein belongs to the glycosyltransferase 4 family. MraY subfamily. Requires Mg(2+) as cofactor.

It is found in the cell inner membrane. The enzyme catalyses UDP-N-acetyl-alpha-D-muramoyl-L-alanyl-gamma-D-glutamyl-meso-2,6-diaminopimeloyl-D-alanyl-D-alanine + di-trans,octa-cis-undecaprenyl phosphate = di-trans,octa-cis-undecaprenyl diphospho-N-acetyl-alpha-D-muramoyl-L-alanyl-D-glutamyl-meso-2,6-diaminopimeloyl-D-alanyl-D-alanine + UMP. Its pathway is cell wall biogenesis; peptidoglycan biosynthesis. In terms of biological role, catalyzes the initial step of the lipid cycle reactions in the biosynthesis of the cell wall peptidoglycan: transfers peptidoglycan precursor phospho-MurNAc-pentapeptide from UDP-MurNAc-pentapeptide onto the lipid carrier undecaprenyl phosphate, yielding undecaprenyl-pyrophosphoryl-MurNAc-pentapeptide, known as lipid I. The protein is Phospho-N-acetylmuramoyl-pentapeptide-transferase of Chlamydia abortus (strain DSM 27085 / S26/3) (Chlamydophila abortus).